Consider the following 254-residue polypeptide: Nickel import ATP-binding protein NikD (254 aa).

Positions 2–241 constitute an ABC transporter domain; it reads PQQIELRNIA…PKHTVTRSLV (240 aa). ATP is bound at residue 36–43; sequence GGSGSGKS.

Belongs to the ABC transporter superfamily. Nickel importer (TC 3.A.1.5.3) family. In terms of assembly, the complex is composed of two ATP-binding proteins (NikD and NikE), two transmembrane proteins (NikB and NikC) and a solute-binding protein (NikA).

The protein resides in the cell inner membrane. The catalysed reaction is Ni(2+)(out) + ATP + H2O = Ni(2+)(in) + ADP + phosphate + H(+). Functionally, part of the ABC transporter complex NikABCDE involved in nickel import. Responsible for energy coupling to the transport system. In Shigella flexneri serotype 5b (strain 8401), this protein is Nickel import ATP-binding protein NikD.